Reading from the N-terminus, the 510-residue chain is ETS translocation variant 5 (510 aa).

The interval 132 to 245 is disordered; the sequence is KPLTPPATPL…PGDSRPSYHR (114 aa). The segment covering 163 to 174 has biased composition (low complexity); it reads TPGAGPVQGVGP. Polar residues predominate over residues 211-224; the sequence is QYPSEQRFQRQLSE. The residue at position 248 (serine 248) is a Phosphoserine. Lysine 350 participates in a covalent cross-link: Glycyl lysine isopeptide (Lys-Gly) (interchain with G-Cter in SUMO2). The segment at residues 368 to 448 is a DNA-binding region (ETS); that stretch reads LQLWQFLVTL…AGERYVYKFV (81 aa).

It belongs to the ETS family. In terms of assembly, interacts (via C-terminal) with ZMYM5 (via N-terminal 120 amino acid region). As to expression, in the brain, expressed predominantly in the cerebral cortex, the amygdala and the hypothalamus. Within the cerebral cortex, there is conspicuously high expression in cortical layers 2, 4 and 6 while expression is almost absent from layers 1, 3 and 5. High expression is also observed in the dorsal and ventral endopiriform claustrum. Strong expression is observed in limited parts of the amygdala including the basolateral amygdaloid nucleus, the bed stria terminalis and the central amygdaloid nucleus. Low to moderate levels are found in the hypothalamus while expression is almost absent in the thalamus. Hypothalamic expression is seen in the dorsomedial hypothalamic nucleus and also the central, dorsomedial and ventrolateral parts of the ventromedial hypothalamic nucleus. Strong expression is also identified in the nigrostriatal tract. In the mesencephalon, expression is restricted to the ventral tegmental area including the parabrachial pigmented nucleus. In the hippocampus, strongly expressed in the pyramidal cell layer. Some expression is also found in the lacunosum moleculare layer. Low levels of expression in the cerebellum, including the granular, molecular and Purkinje cell layers.

It localises to the nucleus. Binds to DNA sequences containing the consensus nucleotide core sequence 5'-GGAA.-3'. In Mus musculus (Mouse), this protein is ETS translocation variant 5 (Etv5).